Here is a 254-residue protein sequence, read N- to C-terminus: Probable glutathione transferase omega-2 (254 aa).

Residues Gly-25–Arg-105 form the GST N-terminal domain. Cys-35 functions as the Nucleophile in the catalytic mechanism. Glutathione-binding positions include Lys-62, Val-75, and Glu-89 to Ser-90. The GST C-terminal domain occupies Asp-110–Phe-239.

Belongs to the GST superfamily. Omega family.

It carries out the reaction RX + glutathione = an S-substituted glutathione + a halide anion + H(+). It catalyses the reaction L-dehydroascorbate + 2 glutathione = glutathione disulfide + L-ascorbate. The catalysed reaction is methylarsonate + 2 glutathione + H(+) = methylarsonous acid + glutathione disulfide + H2O. In terms of biological role, exhibits glutathione-dependent thiol transferase activity. Has dehydroascorbate reductase activity and may contribute to the recycling of ascorbic acid. Participates in the biotransformation of inorganic arsenic and reduces monomethylarsonic acid (MMA). The sequence is that of Probable glutathione transferase omega-2 (gsto-2) from Caenorhabditis elegans.